The following is a 115-amino-acid chain: Protein translation factor SUI1 homolog (115 aa).

It belongs to the SUI1 family.

Probably involved in translation. This chain is Protein translation factor SUI1 homolog, found in Sporobolus stapfianus (Ressurection grass).